Here is a 632-residue protein sequence, read N- to C-terminus: DNA mismatch repair protein MutL (632 aa).

It belongs to the DNA mismatch repair MutL/HexB family.

This protein is involved in the repair of mismatches in DNA. It is required for dam-dependent methyl-directed DNA mismatch repair. May act as a 'molecular matchmaker', a protein that promotes the formation of a stable complex between two or more DNA-binding proteins in an ATP-dependent manner without itself being part of a final effector complex. This chain is DNA mismatch repair protein MutL, found in Pseudomonas putida (strain GB-1).